We begin with the raw amino-acid sequence, 704 residues long: Elongation factor G (704 aa).

Residues 8-290 (ARYRNIGISA…AVIDYLPSPV (283 aa)) form the tr-type G domain. GTP contacts are provided by residues 17-24 (AHIDAGKT), 88-92 (DTPGH), and 142-145 (NKMD).

The protein belongs to the TRAFAC class translation factor GTPase superfamily. Classic translation factor GTPase family. EF-G/EF-2 subfamily.

It is found in the cytoplasm. In terms of biological role, catalyzes the GTP-dependent ribosomal translocation step during translation elongation. During this step, the ribosome changes from the pre-translocational (PRE) to the post-translocational (POST) state as the newly formed A-site-bound peptidyl-tRNA and P-site-bound deacylated tRNA move to the P and E sites, respectively. Catalyzes the coordinated movement of the two tRNA molecules, the mRNA and conformational changes in the ribosome. The polypeptide is Elongation factor G (Salmonella agona (strain SL483)).